A 158-amino-acid polypeptide reads, in one-letter code: Transcription factor bHLH146 (158 aa).

The segment covering 77-90 has biased composition (low complexity); that stretch reads SSSSNPTTTTSSSS. Residues 77 to 110 are disordered; that stretch reads SSSSNPTTTTSSSSDGIRILERPDKEGGNEEGGI. Basic and acidic residues predominate over residues 94 to 110; the sequence is RILERPDKEGGNEEGGI. One can recognise a bHLH; atypical domain in the interval 94-143; it reads RILERPDKEGGNEEGGIEERLRELKKLLPGGEEMNVEEMLSEIGNYIKCL.

It belongs to the bHLH protein family.

It is found in the nucleus. This chain is Transcription factor bHLH146 (BHLH146), found in Arabidopsis thaliana (Mouse-ear cress).